Reading from the N-terminus, the 65-residue chain is Large ribosomal subunit protein bL33c (65 aa).

The protein belongs to the bacterial ribosomal protein bL33 family.

Its subcellular location is the plastid. The protein localises to the chloroplast. This is Large ribosomal subunit protein bL33c from Staurastrum punctulatum (Green alga).